The primary structure comprises 820 residues: Phosphoenolpyruvate synthase (820 aa).

The active-site Tele-phosphohistidine intermediate is histidine 438. The substrate site is built by arginine 539, arginine 587, glutamate 689, glycine 710, serine 711, asparagine 712, and aspartate 713. A Mg(2+)-binding site is contributed by glutamate 689. A Mg(2+)-binding site is contributed by aspartate 713. Cysteine 762 (proton donor) is an active-site residue.

The protein belongs to the PEP-utilizing enzyme family. Requires Mg(2+) as cofactor.

The enzyme catalyses pyruvate + ATP + H2O = phosphoenolpyruvate + AMP + phosphate + 2 H(+). It participates in carbohydrate biosynthesis; gluconeogenesis. Catalyzes the phosphorylation of pyruvate to phosphoenolpyruvate. The polypeptide is Phosphoenolpyruvate synthase (ppsA) (Aeropyrum pernix (strain ATCC 700893 / DSM 11879 / JCM 9820 / NBRC 100138 / K1)).